The chain runs to 651 residues: MSAKIYPVLKSAKARTLIDNERYQKWYQESVEDPEKFWDKHGRRIDWFKPYTKVKNTSFKGRVPIKWFEDGLTNVSYNCIDRHLKTHGERTAIIWEGDNPYIDKKITYNQLYDYVCRLANVLKKHGVKKGDRVTIYMPMIPEAAYAMLACARIGAVHSVVFGGFSPEALAGRIVDCESTFVITCDEGVRGGKPIPLKENTDKAIDIAAKQYVIVNKVLVVRRTGGKTGWAPGRDIWYHQEIATVKPDCPPVKMRAEDPLFILYTSGSTGKPKGVLHTTGGYLVYTSMTHEYVFDYKDGEVFWCTADVGWVTGHSYIVYGPLANCATTLMFEGVPNFPDQGRFWEVIDKHKVNIFYTAPTALRSLMGAGDQFVQRSSRESLRLLGTVGEPINPEAWEWYYHVVGEDKSPIVDTWWQTETGGILISPLPGATDLKPGSATRPFFGVQPQLVDAEGNVLEGPADGNLCIIDSWPGQSRSVYGDHQRFVDTYFSTYKGKYFTGDGCRRDEDGYYWITGRVDDVLNVSGHRLGTAEVESALVSHHQVSEAAVVGYPHPIKGQGIYCYVTLMAGQSGDYALREELVKHVRNEIGPVATPDKIQFAPGLPKTRSGKIMRRILRKIAEDDFGALGDTSTLADPAVVEDLIANRQNRTAS.

Residues 189–192, Thr-311, and Asn-335 contribute to the CoA site; that span reads RGGK. Residues 387–389, 411–416, Asp-500, and Arg-515 each bind ATP; these read GEP and DTWWQT. Ser-523 is a binding site for CoA. Arg-526 provides a ligand contact to ATP. The Mg(2+) site is built by Val-537, His-539, and Val-542. Arg-584 provides a ligand contact to CoA. At Lys-609 the chain carries N6-acetyllysine.

This sequence belongs to the ATP-dependent AMP-binding enzyme family. Mg(2+) serves as cofactor. In terms of processing, acetylated. Deacetylation by the SIR2-homolog deacetylase activates the enzyme.

It carries out the reaction acetate + ATP + CoA = acetyl-CoA + AMP + diphosphate. Functionally, catalyzes the conversion of acetate into acetyl-CoA (AcCoA), an essential intermediate at the junction of anabolic and catabolic pathways. AcsA undergoes a two-step reaction. In the first half reaction, AcsA combines acetate with ATP to form acetyl-adenylate (AcAMP) intermediate. In the second half reaction, it can then transfer the acetyl group from AcAMP to the sulfhydryl group of CoA, forming the product AcCoA. The chain is Acetyl-coenzyme A synthetase from Agrobacterium fabrum (strain C58 / ATCC 33970) (Agrobacterium tumefaciens (strain C58)).